Here is a 184-residue protein sequence, read N- to C-terminus: Adenine phosphoribosyltransferase (184 aa).

The protein belongs to the purine/pyrimidine phosphoribosyltransferase family. As to quaternary structure, homodimer.

Its subcellular location is the cytoplasm. It carries out the reaction AMP + diphosphate = 5-phospho-alpha-D-ribose 1-diphosphate + adenine. It functions in the pathway purine metabolism; AMP biosynthesis via salvage pathway; AMP from adenine: step 1/1. Its function is as follows. Catalyzes a salvage reaction resulting in the formation of AMP, that is energically less costly than de novo synthesis. This Sphingopyxis alaskensis (strain DSM 13593 / LMG 18877 / RB2256) (Sphingomonas alaskensis) protein is Adenine phosphoribosyltransferase.